The following is a 248-amino-acid chain: Granzyme-like protein 1 (248 aa).

The signal sequence occupies residues 1 to 18; sequence MNLLLLLLTVSLAPTTEA. The propeptide at 19-20 is activation peptide; sequence AE. A Peptidase S1 domain is found at 21-246; that stretch reads IIGGHEADPH…FLSWIEETMK (226 aa). A disulfide bridge connects residues Cys50 and Cys66. His65 serves as the catalytic Charge relay system. Asn72 carries an N-linked (GlcNAc...) asparagine glycan. Asp109 serves as the catalytic Charge relay system. Disulfide bonds link Cys143-Cys210 and Cys174-Cys189. The active-site Charge relay system is Ser204.

This sequence belongs to the peptidase S1 family. Granzyme subfamily. In terms of tissue distribution, duodenum.

Its function is as follows. This enzyme is necessary for target cell lysis in cell-mediated immune responses. This Rattus norvegicus (Rat) protein is Granzyme-like protein 1.